Reading from the N-terminus, the 342-residue chain is Methylthioribose-1-phosphate isomerase (342 aa).

Substrate is bound by residues R49–A51, R86, and Q187. D228 acts as the Proton donor in catalysis. N238–K239 lines the substrate pocket.

It belongs to the eIF-2B alpha/beta/delta subunits family. MtnA subfamily.

It carries out the reaction 5-(methylsulfanyl)-alpha-D-ribose 1-phosphate = 5-(methylsulfanyl)-D-ribulose 1-phosphate. The protein operates within amino-acid biosynthesis; L-methionine biosynthesis via salvage pathway; L-methionine from S-methyl-5-thio-alpha-D-ribose 1-phosphate: step 1/6. Catalyzes the interconversion of methylthioribose-1-phosphate (MTR-1-P) into methylthioribulose-1-phosphate (MTRu-1-P). In Citrobacter koseri (strain ATCC BAA-895 / CDC 4225-83 / SGSC4696), this protein is Methylthioribose-1-phosphate isomerase.